A 412-amino-acid polypeptide reads, in one-letter code: Putative oxidoreductase bli-4, mitochondrial (412 aa).

The transit peptide at 1-55 directs the protein to the mitochondrion; that stretch reads MSTKLCQRIARTATLSPTSLVPRSSRLIPIVSSAAVRPSSAIPTRRPFSTTESRY. NADP(+) is bound by residues Ile-108, Asn-120, Asn-186, Tyr-269, Lys-273, Val-308, Thr-310, and Gln-312. Tyr-269 functions as the Proton donor in the catalytic mechanism. Lys-273 serves as the catalytic Lowers pKa of active site Tyr.

This sequence belongs to the short-chain dehydrogenases/reductases (SDR) family.

It localises to the mitochondrion. Its function is as follows. May play a role as an NAD-dependent dehydrogenase in the mitochondria. This is Putative oxidoreductase bli-4, mitochondrial (bli-4) from Neurospora crassa (strain ATCC 24698 / 74-OR23-1A / CBS 708.71 / DSM 1257 / FGSC 987).